A 335-amino-acid chain; its full sequence is 2-acylglycerol O-acyltransferase 2-A (335 aa).

The next 2 membrane-spanning stretches (helical) occupy residues 24–44 (WVFSFLALAQTCILLFFVLLF) and 47–67 (FWIISVVYGVWWFLDWDTPSK).

Belongs to the diacylglycerol acyltransferase family.

It localises to the endoplasmic reticulum membrane. The protein resides in the cytoplasm. It is found in the perinuclear region. It catalyses the reaction a 2-acylglycerol + an acyl-CoA = a 1,2-diacylglycerol + CoA. The enzyme catalyses a 2-acylglycerol + an acyl-CoA = a 1,2-diacyl-sn-glycerol + CoA. It carries out the reaction a 2-acylglycerol + an acyl-CoA = a 2,3-diacyl-sn-glycerol + CoA. The catalysed reaction is a 1-acylglycerol + an acyl-CoA = a 1,2-diacylglycerol + CoA. It catalyses the reaction a 1-acylglycerol + an acyl-CoA = a 1,3-diacylglycerol + CoA. The enzyme catalyses 1-O-alkylglycerol + an acyl-CoA = 1-O-alkyl-3-acylglycerol + CoA. It carries out the reaction an acyl-CoA + a 1,2-diacyl-sn-glycerol = a triacyl-sn-glycerol + CoA. Its pathway is glycerolipid metabolism; triacylglycerol biosynthesis. Catalyzes the formation of diacylglycerol from 2-monoacylglycerol and fatty acyl-CoA. Functionally, involved in glycerolipid synthesis and lipid metabolism. Catalyzes the formation of diacylglycerol, the precursor of triacylglycerol, by transferring the acyl chain of a fatty acyl-CoA to a monoacylglycerol. Plays a central role in absorption of dietary fat in the small intestine by catalyzing the resynthesis of triacylglycerol in enterocytes. Has a preference toward monoacylglycerols containing unsaturated fatty acids in an order of C18:3 &gt; C18:2 &gt; C18:1 &gt; C18:0 at sn-2. Able to use 1-monoalkylglycerol (1-MAkG, 1-O-alkylglycerol) as an acyl acceptor for the synthesis of monoalkyl-monoacylglycerol (MAMAG, 1-O-alkyl-3-acylglycerol or 1-O-alkyl-2-acylglycerol) and subsequently, with lower efficiency, may add another acyl chain producing monoalkyl-diacylglycerol (MADAG, 1-O-alkyl-2,3-diacylglycerol). Possesses weak but significant activity with diacylglycerol as substrate, producing triacylglycerol (triacyl-sn-glycerol). This is 2-acylglycerol O-acyltransferase 2-A (mogat2-a) from Xenopus laevis (African clawed frog).